A 651-amino-acid chain; its full sequence is Acetyl-coenzyme A synthetase (651 aa).

CoA is bound by residues 189 to 192 (RGGK), Thr311, and Asn335. ATP-binding positions include 387–389 (GEP), 411–416 (DTWWQT), Asp500, and Arg515. Ser523 serves as a coordination point for CoA. Position 526 (Arg526) interacts with ATP. Mg(2+) contacts are provided by Val537, His539, and Val542. Arg586 is a binding site for CoA. Lys611 carries the post-translational modification N6-acetyllysine.

The protein belongs to the ATP-dependent AMP-binding enzyme family. It depends on Mg(2+) as a cofactor. Acetylated. Deacetylation by the SIR2-homolog deacetylase activates the enzyme.

The enzyme catalyses acetate + ATP + CoA = acetyl-CoA + AMP + diphosphate. Catalyzes the conversion of acetate into acetyl-CoA (AcCoA), an essential intermediate at the junction of anabolic and catabolic pathways. AcsA undergoes a two-step reaction. In the first half reaction, AcsA combines acetate with ATP to form acetyl-adenylate (AcAMP) intermediate. In the second half reaction, it can then transfer the acetyl group from AcAMP to the sulfhydryl group of CoA, forming the product AcCoA. This chain is Acetyl-coenzyme A synthetase, found in Brucella abortus (strain S19).